Reading from the N-terminus, the 201-residue chain is MAGRESDAVSLAGVVLAGGESRRMGRDKATLVLPGGSTTMVEHVLGIVGQRCEPVFVMAAQGQPLPPLQVPVLRDELRGLGPLPATGRGLRAAAEAGARFAFVCAVDMPGLTVDLIDDLVRSAIETDAEVVLPWDGRSHYLAAIYRTDLAERVDALVAAGERKMSALADSSDTQRIVMSDSAPLANVNTAADLPAPVRPGH.

Residues 16-18 (LAG), Lys-28, Asp-75, and Asp-107 contribute to the GTP site. Residue Asp-107 coordinates Mg(2+).

This sequence belongs to the MobA family. Requires Mg(2+) as cofactor.

It localises to the cytoplasm. It carries out the reaction Mo-molybdopterin + GTP + H(+) = Mo-molybdopterin guanine dinucleotide + diphosphate. Its function is as follows. Transfers a GMP moiety from GTP to Mo-molybdopterin (Mo-MPT) cofactor (Moco or molybdenum cofactor) to form Mo-molybdopterin guanine dinucleotide (Mo-MGD) cofactor. This chain is Probable molybdenum cofactor guanylyltransferase, found in Mycobacterium marinum (strain ATCC BAA-535 / M).